The sequence spans 495 residues: Methyl viologen resistance protein SmvA (495 aa).

Transmembrane regions (helical) follow at residues 5–25 (WLTLVIIVLVYIPVAIDATVL), 44–64 (LWIIDIYSLVMAGMVLPMGAL), 73–93 (LLMLGGTLFGLASLAAAFSHT), 96–116 (WLIATRVLLAIGAAMIVPATL), 135–155 (VWAAVGSGGAAFGPLIGGILL), 158–178 (FYWGSVFLINVPIVLVVMGLT), 192–212 (PLNLGHAVMLIIAILLLVYSA), 220–240 (LSLWVISFTLLTGALLLGLFI), 260–280 (IILSGVVMAMTAMITLVGFEL), 299–319 (VFMLPVMVASGFSGPIAGVLV), 327–347 (VATGGMALSALSFYGLAMTDF), 357–377 (LMALLGFSAASALLASTSAIM), 391–411 (IETMAYELGAGLGIAIFGLLL), and 469–489 (VALSSAGSMLLLLAVGMWFSL).

The protein belongs to the major facilitator superfamily. TCR/Tet family.

It localises to the cell inner membrane. Major efflux pump for acriflavine and other quaternary ammonium compounds (QACs). Also required for resistance to methyl viologen. The chain is Methyl viologen resistance protein SmvA (smvA) from Salmonella typhimurium (strain LT2 / SGSC1412 / ATCC 700720).